Consider the following 239-residue polypeptide: ATP-dependent dethiobiotin synthetase BioD (239 aa).

15-20 (EIGKTF) provides a ligand contact to ATP. Residue Thr-19 coordinates Mg(2+). Residue Lys-40 is part of the active site. ATP-binding positions include Asp-57, 118–121 (EGAG), and 178–179 (NH). Asp-57 and Glu-118 together coordinate Mg(2+).

Belongs to the dethiobiotin synthetase family. As to quaternary structure, homodimer. The cofactor is Mg(2+).

It localises to the cytoplasm. It catalyses the reaction (7R,8S)-7,8-diammoniononanoate + CO2 + ATP = (4R,5S)-dethiobiotin + ADP + phosphate + 3 H(+). The protein operates within cofactor biosynthesis; biotin biosynthesis; biotin from 7,8-diaminononanoate: step 1/2. Its function is as follows. Catalyzes a mechanistically unusual reaction, the ATP-dependent insertion of CO2 between the N7 and N8 nitrogen atoms of 7,8-diaminopelargonic acid (DAPA, also called 7,8-diammoniononanoate) to form a ureido ring. The protein is ATP-dependent dethiobiotin synthetase BioD of Burkholderia lata (strain ATCC 17760 / DSM 23089 / LMG 22485 / NCIMB 9086 / R18194 / 383).